We begin with the raw amino-acid sequence, 87 residues long: Small ribosomal subunit protein uS17 (87 aa).

Belongs to the universal ribosomal protein uS17 family. As to quaternary structure, part of the 30S ribosomal subunit.

One of the primary rRNA binding proteins, it binds specifically to the 5'-end of 16S ribosomal RNA. This Staphylococcus aureus (strain JH1) protein is Small ribosomal subunit protein uS17.